The following is an 85-amino-acid chain: F(1)-ATPase inhibitor IF(1), mitochondrial (85 aa).

The transit peptide at 1-22 (MLPRSALARSLQLQRGVAARFY) directs the protein to the mitochondrion. A coiled-coil region spans residues 41-84 (KRERATEDFFVRQREKEQLRHLKEQLEKQRKKIDSLENKIDSMT).

It belongs to the ATPase inhibitor family. In terms of assembly, monomer and homodimer. The protein aggregates less strongly with increasing pH.

The protein resides in the mitochondrion. Its function is as follows. Endogenous ATPase inhibitor, which inhibits specifically the reverse ATPase reaction of mitochondrial F(1)F(0)-type ATP synthase. It limits ATP depletion when the mitochondrial membrane potential falls below a threshold and the F(1)F(0)-ATP synthase starts hydrolyzing ATP to pump protons out of the mitochondrial matrix. Required to avoid the consumption of cellular ATP when the F(1)F(0)-ATP synthase enzyme acts as an ATP hydrolase. Functions through inserting its N-terminal part into the catalytically active F1-ATPase, thereby blocking its rotational movement and subsequently the ATP hydrolase activity. The chain is F(1)-ATPase inhibitor IF(1), mitochondrial (INH1) from Saccharomyces cerevisiae (strain ATCC 204508 / S288c) (Baker's yeast).